Here is an 830-residue protein sequence, read N- to C-terminus: Dimethylglycine oxidase (830 aa).

Residues 14–15 (IV), 35–36 (DQ), 45–48 (STSH), L52, and V174 each bind FAD. H48 carries the post-translational modification Pros-8alpha-FAD histidine. Residues H225 and Y259 contribute to the active site. Residues Y259 and 360–363 (VWVT) each bind FAD. (6S)-5,6,7,8-tetrahydrofolate is bound at residue Y539. D552 (for 5,10-methylenetetrahydrofolate synthesis activity) is an active-site residue. Residues T554, G566, and 658-660 (ELY) contribute to the (6S)-5,6,7,8-tetrahydrofolate site.

Belongs to the GcvT family. It depends on FAD as a cofactor.

The catalysed reaction is N,N-dimethylglycine + O2 + H2O = sarcosine + formaldehyde + H2O2. It catalyses the reaction N,N-dimethylglycine + (6S)-5,6,7,8-tetrahydrofolate + O2 = sarcosine + (6R)-5,10-methylene-5,6,7,8-tetrahydrofolate + H2O2. Catalyzes the oxidative demethylation of N,N-dimethylglycine to yield sarcosine, formaldehyde and hydrogen peroxide. The oxidation of dimethylglycine is coupled to the synthesis of 5,10-methylenetetrahydrofolate through an unusual substrate channeling mechanism. This channeling occurs by nonbiased diffusion of the iminium intermediate through a large solvent cavity connecting active site 1 (N-terminus) and active site 2 (C-terminus). The synthesis of 5,10-methylenetetrahydrofolate (at active site 2) prevents the accumulation of formaldehyde, formed by hydrolysis of the iminium intermediate product (at active site 1). Does not oxidize sarcosine. The polypeptide is Dimethylglycine oxidase (dmg) (Arthrobacter globiformis).